The following is a 110-amino-acid chain: UPF0060 membrane protein Pmen_1247 (110 aa).

The next 4 membrane-spanning stretches (helical) occupy residues 5 to 25, 31 to 51, 59 to 79, and 84 to 104; these read LWFL…WMWL, AWWI…LTRV, AYAA…ALIE, and MLSD…ILFA.

The protein belongs to the UPF0060 family.

It localises to the cell inner membrane. The protein is UPF0060 membrane protein Pmen_1247 of Ectopseudomonas mendocina (strain ymp) (Pseudomonas mendocina).